The following is a 305-amino-acid chain: Flagellin FlaB2 (305 aa).

Residues 1–18 (MGLQKIVKKYNKKMKRKG) constitute a propeptide, propeptide.

The protein belongs to the archaeal flagellin family. Post-translationally, glycosylated.

The protein localises to the archaeal flagellum. Functionally, flagellin is the subunit protein which polymerizes to form the filaments of archaeal flagella. The protein is Flagellin FlaB2 of Saccharolobus shibatae (strain ATCC 51178 / DSM 5389 / JCM 8931 / NBRC 15437 / B12) (Sulfolobus shibatae).